The primary structure comprises 36 residues: APLEPVYPGDNATPEQMAQYAAELRRYINMLTRPRY.

Y36 carries the post-translational modification Tyrosine amide.

The protein belongs to the NPY family.

The protein resides in the secreted. Its function is as follows. Hormone secreted by pancreatic cells that acts as a regulator of pancreatic and gastrointestinal functions probably by signaling through the G protein-coupled receptor NPY4R2. This is Pancreatic polypeptide (PPY) from Tapirus pinchaque (Mountain tapir).